The following is a 225-amino-acid chain: Small ribosomal subunit protein mS26 (225 aa).

The protein belongs to the mitochondrion-specific ribosomal protein mS26 family. Component of the mitochondrial ribosome small subunit (28S) which comprises a 12S rRNA and about 30 distinct proteins.

It localises to the mitochondrion. In Drosophila melanogaster (Fruit fly), this protein is Small ribosomal subunit protein mS26 (mRpS26).